Consider the following 266-residue polypeptide: GTP cyclohydrolase FolE2 (266 aa).

It belongs to the GTP cyclohydrolase IV family.

It catalyses the reaction GTP + H2O = 7,8-dihydroneopterin 3'-triphosphate + formate + H(+). The protein operates within cofactor biosynthesis; 7,8-dihydroneopterin triphosphate biosynthesis; 7,8-dihydroneopterin triphosphate from GTP: step 1/1. Its function is as follows. Converts GTP to 7,8-dihydroneopterin triphosphate. In Methylobacillus flagellatus (strain ATCC 51484 / DSM 6875 / VKM B-1610 / KT), this protein is GTP cyclohydrolase FolE2.